Reading from the N-terminus, the 881-residue chain is Envelope glycoprotein gp160 (881 aa).

Residues 1-19 (MGCLGNQLLIAILLLSVYG) form the signal peptide. Residues 20–696 (IYCTQYVTVF…ASWIKYIQYG (677 aa)) lie on the Extracellular side of the membrane. A glycan (N-linked (GlcNAc...) asparagine; by host) is linked at asparagine 37. Cysteine 44 and cysteine 57 form a disulfide bridge. Residues asparagine 70, asparagine 114, asparagine 148, asparagine 158, asparagine 186, asparagine 200, asparagine 204, asparagine 214, asparagine 246, asparagine 249, asparagine 280, asparagine 286, asparagine 297, asparagine 308, asparagine 318, asparagine 373, and asparagine 379 are each glycosylated (N-linked (GlcNAc...) asparagine; by host). Disulfide bonds link cysteine 101/cysteine 222, cysteine 108/cysteine 213, cysteine 113/cysteine 170, cysteine 235/cysteine 265, and cysteine 245/cysteine 257. The V1 stretch occupies residues 113–169 (CNKSETDRWGLTKSSTTITTAAPTSAPVSEKIDMVNETSSCIAQNNCTGLEQEQMIS). Residues 170–213 (CKFTMTGLKRDKTKEYNETWYSTDLVCEQGNSTDNESRCYMNHC) are V2. Residues 313 to 345 (CRRPGNKTVLPVTIMSGLVFHSQPLTDRPKQAW) are V3. Cysteine 313 and cysteine 346 are disulfide-bonded. Disulfide bonds link cysteine 397-cysteine 461 and cysteine 404-cysteine 434. The segment at 404-434 (CKMNWFLNWVEDRDVTTQRPKERHRRNYVPC) is V4. 2 N-linked (GlcNAc...) asparagine; by host glycosylation sites follow: asparagine 462 and asparagine 478. Positions 477–484 (GNQTSITM) are V5. Positions 528-548 (GVFVLGFLGFLATAGSAMGAA) are fusion peptide. An immunosuppression region spans residues 591 to 607 (LQTRVTAIEKYLEDQAQ). Asparagine 627, asparagine 636, and asparagine 652 each carry an N-linked (GlcNAc...) asparagine; by host glycan. Residues 636–668 (NDTWQEWERKVDFLEENITALLEEAQIQQEKNM) adopt a coiled-coil conformation. Residues 673-694 (KLNSWDVFGNWFDLASWIKYIQ) are MPER; binding to GalCer. A helical membrane pass occupies residues 697 to 717 (IYVVVGVILLRIVIYIVQMLA). Residues 718–881 (KLRQGYRPVF…IRQGLELTLL (164 aa)) lie on the Cytoplasmic side of the membrane. The YXXV motif; contains endocytosis signal signature appears at 723–726 (YRPV). The interval 737 to 761 (THTQQDPALPTREGKEGDGGEGGGN) is disordered. The S-palmitoyl cysteine; by host moiety is linked to residue cysteine 789. The short motif at 880 to 881 (LL) is the Di-leucine internalization motif element.

As to quaternary structure, the mature envelope protein (Env) consists of a homotrimer of non-covalently associated gp120-gp41 heterodimers. The resulting complex protrudes from the virus surface as a spike. Interacts with host CD4 and CCR5. Gp120 also interacts with the C-type lectins CD209/DC-SIGN and CLEC4M/DC-SIGNR (collectively referred to as DC-SIGN(R)). In terms of assembly, the mature envelope protein (Env) consists of a homotrimer of non-covalently associated gp120-gp41 heterodimers. The resulting complex protrudes from the virus surface as a spike. Post-translationally, specific enzymatic cleavages in vivo yield mature proteins. Envelope glycoproteins are synthesized as an inactive precursor that is heavily N-glycosylated and processed likely by host cell furin in the Golgi to yield the mature SU and TM proteins. The cleavage site between SU and TM requires the minimal sequence [KR]-X-[KR]-R. Palmitoylation of the transmembrane protein and of Env polyprotein (prior to its proteolytic cleavage) is essential for their association with host cell membrane lipid rafts. Palmitoylation is therefore required for envelope trafficking to classical lipid rafts, but not for viral replication.

It is found in the virion membrane. It localises to the host cell membrane. Its subcellular location is the host endosome membrane. Functionally, the surface protein gp120 (SU) attaches the virus to the host lymphoid cell by binding to the primary receptor CD4. This interaction induces a structural rearrangement creating a high affinity binding site for a chemokine coreceptor like CCR5. This peculiar 2 stage receptor-interaction strategy allows gp120 to maintain the highly conserved coreceptor-binding site in a cryptic conformation, protected from neutralizing antibodies. These changes are transmitted to the transmembrane protein gp41 and are thought to activate its fusogenic potential by unmasking its fusion peptide. Its function is as follows. Surface protein gp120 (SU) may target the virus to gut-associated lymphoid tissue (GALT) by binding host ITGA4/ITGB7 (alpha-4/beta-7 integrins), a complex that mediates T-cell migration to the GALT. Interaction between gp120 and ITGA4/ITGB7 would allow the virus to enter GALT early in the infection, infecting and killing most of GALT's resting CD4+ T-cells. This T-cell depletion is believed to be the major insult to the host immune system leading to AIDS. In terms of biological role, the surface protein gp120 is a ligand for CD209/DC-SIGN and CLEC4M/DC-SIGNR, which are respectively found on dendritic cells (DCs), and on endothelial cells of liver sinusoids and lymph node sinuses. These interactions allow capture of viral particles at mucosal surfaces by these cells and subsequent transmission to permissive cells. DCs are professional antigen presenting cells, critical for host immunity by inducing specific immune responses against a broad variety of pathogens. They act as sentinels in various tissues where they take up antigen, process it, and present it to T-cells following migration to lymphoid organs. SIV subverts the migration properties of dendritic cells to gain access to CD4+ T-cells in lymph nodes. Virus transmission to permissive T-cells occurs either in trans (without DCs infection, through viral capture and transmission), or in cis (following DCs productive infection, through the usual CD4-gp120 interaction), thereby inducing a robust infection. In trans infection, bound virions remain infectious over days and it is proposed that they are not degraded, but protected in non-lysosomal acidic organelles within the DCs close to the cell membrane thus contributing to the viral infectious potential during DCs' migration from the periphery to the lymphoid tissues. On arrival at lymphoid tissues, intact virions recycle back to DCs' cell surface allowing virus transmission to CD4+ T-cells. Virion capture also seems to lead to MHC-II-restricted viral antigen presentation, and probably to the activation of SIV-specific CD4+ cells. The transmembrane protein gp41 (TM) acts as a class I viral fusion protein. Under the current model, the protein has at least 3 conformational states: pre-fusion native state, pre-hairpin intermediate state, and post-fusion hairpin state. During fusion of viral and target intracellular membranes, the coiled coil regions (heptad repeats) assume a trimer-of-hairpins structure, positioning the fusion peptide in close proximity to the C-terminal region of the ectodomain. The formation of this structure appears to drive apposition and subsequent fusion of viral and target cell membranes. Complete fusion occurs in host cell endosomes. The virus undergoes clathrin-dependent internalization long before endosomal fusion, thus minimizing the surface exposure of conserved viral epitopes during fusion and reducing the efficacy of inhibitors targeting these epitopes. Membranes fusion leads to delivery of the nucleocapsid into the cytoplasm. Functionally, the envelope glycoprotein gp160 precursor down-modulates cell surface CD4 antigen by interacting with it in the endoplasmic reticulum and blocking its transport to the cell surface. Its function is as follows. The gp120-gp41 heterodimer allows rapid transcytosis of the virus through CD4 negative cells such as simple epithelial monolayers of the intestinal, rectal and endocervical epithelial barriers. Both gp120 and gp41 specifically recognize glycosphingolipids galactosyl-ceramide (GalCer) or 3' sulfo-galactosyl-ceramide (GalS) present in the lipid rafts structures of epithelial cells. Binding to these alternative receptors allows the rapid transcytosis of the virus through the epithelial cells. This transcytotic vesicle-mediated transport of virions from the apical side to the basolateral side of the epithelial cells does not involve infection of the cells themselves. This is Envelope glycoprotein gp160 (env) from Simian immunodeficiency virus (isolate K6W) (SIV-mac).